An 89-amino-acid chain; its full sequence is Neurotoxin beta-KTx 12 (89 aa).

A signal peptide spans 1–20; the sequence is MKQYIFFLALIVLVSTFAEA. Positions 21 to 39 are excised as a propeptide; that stretch reads GKKTEILDKVKKVFSKAKD. Positions 53–89 constitute a BetaSPN-type CS-alpha/beta domain; sequence ELGCPFIDKWCEDHCESKKLVGKCENFDCSCVKLGGK. 3 disulfides stabilise this stretch: Cys56–Cys76, Cys63–Cys81, and Cys67–Cys83.

Belongs to the long chain scorpion toxin family. Class 2 subfamily. Expressed by the venom gland.

The protein resides in the secreted. Inhibits voltage-gated potassium channel. The polypeptide is Neurotoxin beta-KTx 12 (Lychas mucronatus (Chinese swimming scorpion)).